The following is a 907-amino-acid chain: Avirulence protein A (907 aa).

Polar residues-rich tracts occupy residues 1 to 11 (MWNVSKSSNNL) and 124 to 136 (AGSN…SSDP). Disordered stretches follow at residues 1–47 (MWNV…HDQL) and 116–157 (NDDF…KKSY).

This Pseudomonas savastanoi pv. glycinea (Pseudomonas syringae pv. glycinea) protein is Avirulence protein A (avrA).